The chain runs to 277 residues: Large ribosomal subunit protein uL2 (277 aa).

The disordered stretch occupies residues 222 to 277 (GSVMNPNDHPHGGGEGKAPVGRKAPSTPWGKPALGLKTRNKKAKSDKLIVRRRNQK).

The protein belongs to the universal ribosomal protein uL2 family. As to quaternary structure, part of the 50S ribosomal subunit. Forms a bridge to the 30S subunit in the 70S ribosome.

In terms of biological role, one of the primary rRNA binding proteins. Required for association of the 30S and 50S subunits to form the 70S ribosome, for tRNA binding and peptide bond formation. It has been suggested to have peptidyltransferase activity; this is somewhat controversial. Makes several contacts with the 16S rRNA in the 70S ribosome. This is Large ribosomal subunit protein uL2 from Streptococcus agalactiae serotype Ia (strain ATCC 27591 / A909 / CDC SS700).